The primary structure comprises 395 residues: Outer membrane protein assembly factor BamB (395 aa).

The signal sequence occupies residues 1–20 (MKSWCKNLLAAGLSLAMLSA). C21 is lipidated: N-palmitoyl cysteine. C21 is lipidated: S-diacylglycerol cysteine.

Belongs to the BamB family. In terms of assembly, part of the Bam complex.

It localises to the cell outer membrane. In terms of biological role, part of the outer membrane protein assembly complex, which is involved in assembly and insertion of beta-barrel proteins into the outer membrane. This chain is Outer membrane protein assembly factor BamB, found in Shewanella oneidensis (strain ATCC 700550 / JCM 31522 / CIP 106686 / LMG 19005 / NCIMB 14063 / MR-1).